Reading from the N-terminus, the 185-residue chain is Adenine phosphoribosyltransferase (185 aa).

Belongs to the purine/pyrimidine phosphoribosyltransferase family. In terms of assembly, homodimer.

It is found in the cytoplasm. It catalyses the reaction AMP + diphosphate = 5-phospho-alpha-D-ribose 1-diphosphate + adenine. It functions in the pathway purine metabolism; AMP biosynthesis via salvage pathway; AMP from adenine: step 1/1. Its function is as follows. Catalyzes a salvage reaction resulting in the formation of AMP, that is energically less costly than de novo synthesis. The chain is Adenine phosphoribosyltransferase from Rubrobacter xylanophilus (strain DSM 9941 / JCM 11954 / NBRC 16129 / PRD-1).